The chain runs to 102 residues: Gonadotropin subunit beta-1 (102 aa).

5 disulfides stabilise this stretch: Cys-8–Cys-51, Cys-20–Cys-65, Cys-31–Cys-77, Cys-35–Cys-79, and Cys-82–Cys-89. An N-linked (GlcNAc...) asparagine glycan is attached at Asn-12.

The protein belongs to the glycoprotein hormones subunit beta family. As to quaternary structure, heterodimer of an alpha and a beta chain.

The protein resides in the secreted. In terms of biological role, involved in gametogenesis and steroidogenesis. The chain is Gonadotropin subunit beta-1 (cgba) from Thunnus obesus (Bigeye tuna).